Here is a 219-residue protein sequence, read N- to C-terminus: Cytochrome b6 (219 aa).

Residues 32-52 (IFYCFGGIVLTCFIIQAATGF) form a helical membrane-spanning segment. Residue Cys35 participates in heme c binding. Heme b contacts are provided by His86 and His100. 3 helical membrane-spanning segments follow: residues 90 to 110 (SGLMVLVLLLHVSRVYLTAGF), 116 to 136 (LTWISGVILAICTVSFGVTGY), and 190 to 210 (AHTFILPLVTLALLLTHFLMI). 2 residues coordinate heme b: His191 and His206.

The protein belongs to the cytochrome b family. PetB subfamily. As to quaternary structure, the 4 large subunits of the cytochrome b6-f complex are cytochrome b6, subunit IV (17 kDa polypeptide, PetD), cytochrome f and the Rieske protein, while the 4 small subunits are PetG, PetL, PetM and PetN. The complex functions as a dimer. Heme b is required as a cofactor. Requires heme c as cofactor.

The protein localises to the plastid. It localises to the chloroplast thylakoid membrane. Functionally, component of the cytochrome b6-f complex, which mediates electron transfer between photosystem II (PSII) and photosystem I (PSI), cyclic electron flow around PSI, and state transitions. This chain is Cytochrome b6, found in Amphidinium operculatum (Dinoflagellate).